A 305-amino-acid polypeptide reads, in one-letter code: uncharacterized protein (305 aa).

This sequence belongs to the ADP-ribosylglycohydrolase family.

This is an uncharacterized protein from Archaeoglobus fulgidus (strain ATCC 49558 / DSM 4304 / JCM 9628 / NBRC 100126 / VC-16).